Reading from the N-terminus, the 350-residue chain is Heat-inducible transcription repressor HrcA (350 aa).

It belongs to the HrcA family.

Negative regulator of class I heat shock genes (grpE-dnaK-dnaJ and groELS operons). Prevents heat-shock induction of these operons. This is Heat-inducible transcription repressor HrcA from Xanthomonas axonopodis pv. citri (strain 306).